The sequence spans 325 residues: ATP phosphoribosyltransferase (325 aa).

Belongs to the ATP phosphoribosyltransferase family. Long subfamily. Mg(2+) serves as cofactor.

The protein localises to the cytoplasm. It carries out the reaction 1-(5-phospho-beta-D-ribosyl)-ATP + diphosphate = 5-phospho-alpha-D-ribose 1-diphosphate + ATP. It participates in amino-acid biosynthesis; L-histidine biosynthesis; L-histidine from 5-phospho-alpha-D-ribose 1-diphosphate: step 1/9. Feedback inhibited by histidine. In terms of biological role, catalyzes the condensation of ATP and 5-phosphoribose 1-diphosphate to form N'-(5'-phosphoribosyl)-ATP (PR-ATP). Has a crucial role in the pathway because the rate of histidine biosynthesis seems to be controlled primarily by regulation of HisG enzymatic activity. This Rhodopseudomonas palustris (strain HaA2) protein is ATP phosphoribosyltransferase.